Reading from the N-terminus, the 631-residue chain is Probable glutamate--tRNA ligase, cytoplasmic (631 aa).

139 to 141 (RFP) serves as a coordination point for L-glutamate. Positions 144-153 (PSGFLHIGHI) match the 'HIGH' region motif. Histidine 149 provides a ligand contact to ATP. Residues aspartate 173, 311–315 (YDFAC), and arginine 329 contribute to the L-glutamate site. ATP contacts are provided by residues glutamate 332 and 367 to 371 (VLSKR). The short motif at 367–371 (VLSKR) is the 'KMSKS' region element.

It belongs to the class-I aminoacyl-tRNA synthetase family. Glutamate--tRNA ligase type 2 subfamily.

The protein resides in the cytoplasm. It carries out the reaction tRNA(Glu) + L-glutamate + ATP = L-glutamyl-tRNA(Glu) + AMP + diphosphate. This is Probable glutamate--tRNA ligase, cytoplasmic from Enterocytozoon bieneusi (strain H348) (Microsporidian parasite).